Reading from the N-terminus, the 59-residue chain is uncharacterized protein (59 aa).

The protein localises to the mitochondrion. This is an uncharacterized protein from Ascobolus immersus.